A 252-amino-acid polypeptide reads, in one-letter code: Aspartate/glutamate leucyltransferase (252 aa).

This sequence belongs to the R-transferase family. Bpt subfamily.

The protein resides in the cytoplasm. The catalysed reaction is N-terminal L-glutamyl-[protein] + L-leucyl-tRNA(Leu) = N-terminal L-leucyl-L-glutamyl-[protein] + tRNA(Leu) + H(+). It catalyses the reaction N-terminal L-aspartyl-[protein] + L-leucyl-tRNA(Leu) = N-terminal L-leucyl-L-aspartyl-[protein] + tRNA(Leu) + H(+). Functions in the N-end rule pathway of protein degradation where it conjugates Leu from its aminoacyl-tRNA to the N-termini of proteins containing an N-terminal aspartate or glutamate. This is Aspartate/glutamate leucyltransferase from Agrobacterium fabrum (strain C58 / ATCC 33970) (Agrobacterium tumefaciens (strain C58)).